We begin with the raw amino-acid sequence, 259 residues long: Triosephosphate isomerase (259 aa).

A substrate-binding site is contributed by 10-12 (NWK). Catalysis depends on His-102, which acts as the Electrophile. Catalysis depends on Glu-172, which acts as the Proton acceptor. Residues Gly-178, Ser-218, and 239–240 (GG) contribute to the substrate site.

This sequence belongs to the triosephosphate isomerase family. Homodimer.

It is found in the cytoplasm. The enzyme catalyses D-glyceraldehyde 3-phosphate = dihydroxyacetone phosphate. It participates in carbohydrate biosynthesis; gluconeogenesis. Its pathway is carbohydrate degradation; glycolysis; D-glyceraldehyde 3-phosphate from glycerone phosphate: step 1/1. Involved in the gluconeogenesis. Catalyzes stereospecifically the conversion of dihydroxyacetone phosphate (DHAP) to D-glyceraldehyde-3-phosphate (G3P). This chain is Triosephosphate isomerase, found in Leifsonia xyli subsp. xyli (strain CTCB07).